Here is a 984-residue protein sequence, read N- to C-terminus: Probable beta-galactosidase C (984 aa).

The signal sequence occupies residues 1 to 19; sequence MRLLNIFTTLCLLLWSGAA. The substrate site is built by tyrosine 78, asparagine 123, alanine 124, glutamate 125, and asparagine 183. Glutamate 184 acts as the Proton donor in catalysis. Tyrosine 247 is a substrate binding site. Cysteines 253 and 300 form a disulfide. Asparagine 272 is a glycosylation site (N-linked (GlcNAc...) asparagine). Glutamate 283 serves as the catalytic Nucleophile. Position 349 (tyrosine 349) interacts with substrate. Asparagine 387, asparagine 433, asparagine 462, asparagine 516, asparagine 583, asparagine 599, asparagine 673, asparagine 716, asparagine 756, asparagine 860, and asparagine 870 each carry an N-linked (GlcNAc...) asparagine glycan.

The protein belongs to the glycosyl hydrolase 35 family.

It is found in the secreted. It carries out the reaction Hydrolysis of terminal non-reducing beta-D-galactose residues in beta-D-galactosides.. In terms of biological role, cleaves beta-linked terminal galactosyl residues from gangliosides, glycoproteins, and glycosaminoglycans. The protein is Probable beta-galactosidase C (lacC) of Sclerotinia sclerotiorum (strain ATCC 18683 / 1980 / Ss-1) (White mold).